A 380-amino-acid polypeptide reads, in one-letter code: 4-hydroxy-3-methylbut-2-en-1-yl diphosphate synthase (flavodoxin) (380 aa).

Residues Cys280, Cys283, Cys315, and Glu322 each contribute to the [4Fe-4S] cluster site.

It belongs to the IspG family. [4Fe-4S] cluster is required as a cofactor.

The enzyme catalyses (2E)-4-hydroxy-3-methylbut-2-enyl diphosphate + oxidized [flavodoxin] + H2O + 2 H(+) = 2-C-methyl-D-erythritol 2,4-cyclic diphosphate + reduced [flavodoxin]. The protein operates within isoprenoid biosynthesis; isopentenyl diphosphate biosynthesis via DXP pathway; isopentenyl diphosphate from 1-deoxy-D-xylulose 5-phosphate: step 5/6. Converts 2C-methyl-D-erythritol 2,4-cyclodiphosphate (ME-2,4cPP) into 1-hydroxy-2-methyl-2-(E)-butenyl 4-diphosphate. The protein is 4-hydroxy-3-methylbut-2-en-1-yl diphosphate synthase (flavodoxin) of Cutibacterium acnes (strain DSM 16379 / KPA171202) (Propionibacterium acnes).